We begin with the raw amino-acid sequence, 450 residues long: Protein phosphatase 1F (450 aa).

The 258-residue stretch at 152 to 409 folds into the PPM-type phosphatase domain; that stretch reads LVSIHAIRNT…DNITVMVVFL (258 aa). Positions 194, 195, 356, and 400 each coordinate Mn(2+). Residues 420-450 form a disordered region; sequence GQGAGGAQADVGSQDLSTGLSELEINTSQRS. A compositionally biased stretch (polar residues) spans 433–450; it reads QDLSTGLSELEINTSQRS. Ser-450 carries the post-translational modification Phosphoserine.

The protein belongs to the PP2C family. In terms of assembly, associates with FEM1B. Mg(2+) serves as cofactor. Mn(2+) is required as a cofactor.

The enzyme catalyses O-phospho-L-seryl-[protein] + H2O = L-seryl-[protein] + phosphate. It catalyses the reaction O-phospho-L-threonyl-[protein] + H2O = L-threonyl-[protein] + phosphate. In terms of biological role, dephosphorylates and concomitantly deactivates CaM-kinase II activated upon autophosphorylation, and CaM-kinases IV and I activated upon phosphorylation by CaM-kinase kinase. Promotes apoptosis. The chain is Protein phosphatase 1F (Ppm1f) from Rattus norvegicus (Rat).